The following is a 325-amino-acid chain: Helicase VP6-A (325 aa).

Disordered stretches follow at residues 1–126 (MLLA…TNGR) and 175–231 (GVAE…PARI). Basic and acidic residues-rich tracts occupy residues 8–18 (VIKRSSEELKQ), 32–54 (EGGKEDKTEPKEESKAEGSKDGE), 61–79 (GQKEEGGKETKDADVDRRI), and 92–105 (PGERANENADRGDG). Residue lysine 106 coordinates ATP. Positions 106–122 (KVGGGGGDADAGVGATG) are enriched in gly residues. Basic and acidic residues predominate over residues 175 to 229 (GVAEQTERLRDLRRKEKNGTHAKAVERGGRKQRKESHGDAQREGVEEEKTSEEPA).

Belongs to the orbivirus VP6 family. As to quaternary structure, homohexamer.

It localises to the virion. The catalysed reaction is ATP + H2O = ADP + phosphate + H(+). ATP dependent RNA helicase essential for RNA packaging and viral transcription. Possesses ss- and dsRNA-binding capacity. The polypeptide is Helicase VP6-A (Segment-9) (Bluetongue virus 11 (isolate USA) (BTV 11)).